A 212-amino-acid polypeptide reads, in one-letter code: MQLFHLCLIISCSCPTVQASKLCLGWLWGMDIDPYKEFGASVELLSFLPSDFFPSVRDLLDTASALYREALESPEHCSPHHTALRQAILCWGELMNLATWVGSNLEDPASRELVVSYVNVNMGLKIRQLLWFHISCLTFGRETVLEYLVSFGVWIRTPPAYRPPNAPILSTLPETTVVRRRGRSPRRRTPSPRRRRSQSPRRRRSQSRESQC.

The N-terminal stretch at 1 to 19 is a signal peptide; it reads MQLFHLCLIISCSCPTVQA. The tract at residues 25 to 27 is HBEAG; that stretch reads GWL. The disordered stretch occupies residues 165–212; sequence NAPILSTLPETTVVRRRGRSPRRRTPSPRRRRSQSPRRRRSQSRESQC. The segment covering 178–205 has biased composition (basic residues); sequence VRRRGRSPRRRTPSPRRRRSQSPRRRRS. The stretch at 184–190 is one 1; half-length repeat; the sequence is SPRRRTP. A 3 X 8 AA repeats of S-P-R-R-R-R-S-Q region spans residues 184-206; it reads SPRRRTPSPRRRRSQSPRRRRSQ. Positions 184 to 212 are excised as a propeptide; sequence SPRRRTPSPRRRRSQSPRRRRSQSRESQC. A run of 2 repeats spans residues 191 to 198 and 199 to 206.

This sequence belongs to the orthohepadnavirus precore antigen family. As to quaternary structure, homodimerizes. In terms of processing, phosphorylated. Post-translationally, cleaved by host furin.

Its subcellular location is the secreted. It is found in the host nucleus. Its function is as follows. May regulate immune response to the intracellular capsid in acting as a T-cell tolerogen, by having an immunoregulatory effect which prevents destruction of infected cells by cytotoxic T-cells. This immune regulation may predispose to chronicity during perinatal infections and prevent severe liver injury during adult infections. The polypeptide is External core antigen (Homo sapiens (Human)).